The chain runs to 519 residues: (3S,6E)-nerolidol synthase 1 (519 aa).

Residues D273, D277, D417, S421, and E425 each contribute to the Mg(2+) site. Positions 273-277 (DDIFD) match the DDXXD motif motif.

Belongs to the terpene synthase family. Tpsg subfamily. The cofactor is Mg(2+). Requires Mn(2+) as cofactor. Expressed in receptacle tissue. Not detected in leaves or green fruit.

The protein resides in the cytoplasm. The protein localises to the cytosol. The catalysed reaction is (2E,6E)-farnesyl diphosphate + H2O = (3S,6E)-nerolidol + diphosphate. The protein operates within secondary metabolite biosynthesis; terpenoid biosynthesis. Involved in monoterpene (C10) and sesquiterpene (C15) biosynthesis. Converts geranyl diphosphate (GPP) into S-linalool and farnesyl diphosphate (FPP) into (3S)-E-nerolidol. Exclusively present and highly expressed in the fruit of cultivated (octaploid) varieties. The chain is (3S,6E)-nerolidol synthase 1 from Fragaria ananassa (Strawberry).